The following is a 306-amino-acid chain: Curved DNA-binding protein (306 aa).

A J domain is found at 5-69 (DYYAIMGVKP…QRRAEYDQLW (65 aa)).

It localises to the cytoplasm. It is found in the nucleoid. Functionally, DNA-binding protein that preferentially recognizes a curved DNA sequence. It is probably a functional analog of DnaJ; displays overlapping activities with DnaJ, but functions under different conditions, probably acting as a molecular chaperone in an adaptive response to environmental stresses other than heat shock. Lacks autonomous chaperone activity; binds native substrates and targets them for recognition by DnaK. Its activity is inhibited by the binding of CbpM. This chain is Curved DNA-binding protein, found in Salmonella paratyphi A (strain ATCC 9150 / SARB42).